The primary structure comprises 222 residues: Thymidylate kinase (222 aa).

G10 to S17 is a binding site for ATP.

Belongs to the thymidylate kinase family.

It catalyses the reaction dTMP + ATP = dTDP + ADP. Its function is as follows. Phosphorylation of dTMP to form dTDP in both de novo and salvage pathways of dTTP synthesis. In Alteromonas mediterranea (strain DSM 17117 / CIP 110805 / LMG 28347 / Deep ecotype), this protein is Thymidylate kinase.